We begin with the raw amino-acid sequence, 2003 residues long: Histone acetyltransferase KAT6A (2003 aa).

In terms of domain architecture, SAMD1-like winged helix (WH) spans 1–77; the sequence is MVKLANPLYT…LNSYKDPDNP (77 aa). The tract at residues 1–144 is required for activation of RUNX1-1; it reads MVKLANPLYT…CGGSAAPGFH (144 aa). Residues 52-166 form a required for nuclear localization region; it reads ELSVKDGTIL…HGRLLKDGPL (115 aa). Residues 95–171 form the H15 domain; it reads QSVDWNKLLK…KDGPLYRLNT (77 aa). An interaction with PML region spans residues 144–663; sequence HQQLRLAIKR…RKGYGRFLID (520 aa). Lys172 is subject to N6-acetyllysine. 2 consecutive PHD-type zinc fingers follow at residues 206–265 and 262–313; these read IPIC…CKTC and CKTC…CRPR. Residues 312 to 663 are interaction with RUNX1-1; sequence PRKKGRKLLQ…RKGYGRFLID (352 aa). Residues 336–377 are disordered; sequence GRPKNRLKKQNTVSKGPFSKVRTGPGRGRKRKITVSSQSASS. Residues Lys350 and Lys355 each carry the N6-acetyllysine modification. A Phosphothreonine; by PKB/AKT1 modification is found at Thr369. Position 419 is a phosphoserine (Ser419). The disordered stretch occupies residues 439–466; sequence RKKGNRKSSTSDWPTDNQDGWESKQENE. Over residues 445–458 the composition is skewed to polar residues; it reads KSSTSDWPTDNQDG. At Ser472 the chain carries Phosphoserine. The segment at 487–777 is catalytic; that stretch reads IQEQALQKVG…VDPECLRWTP (291 aa). Residues 503–777 enclose the MYST-type HAT domain; sequence PQVRCPSVIE…VDPECLRWTP (275 aa). The interval 506–809 is mediates interaction with BRPF1, required for histone H3 acetyltransferase activity; it reads RCPSVIEFGK…EPQGQERELE (304 aa). The C2HC MYST-type zinc finger occupies 536-561; it reads LYLCEFCLKYMKSRTILQQHMKKCGW. At Lys603 the chain carries N6-acetyllysine; by autocatalysis. Acetyl-CoA is bound by residues 644–648 and 653–659; these read SCIMI and QRKGYGR. Glu679 (proton donor/acceptor) is an active-site residue. Ser683 is a binding site for acetyl-CoA. Residues 784 to 939 are disordered; that stretch reads VVSEDEDEEA…DGKPDIPKGR (156 aa). Ser786 is subject to Phosphoserine. A compositionally biased stretch (acidic residues) spans 786-798; sequence SEDEDEEADEGEK. A compositionally biased stretch (basic and acidic residues) spans 799 to 841; the sequence is EEPQGQERELETRVKVGKSVSREKKDQESSSLIETDKKPEVKE. N6-acetyllysine is present on residues Lys813 and Lys816. Lys836 is covalently cross-linked (Glycyl lysine isopeptide (Lys-Gly) (interchain with G-Cter in SUMO2)). Basic residues predominate over residues 866 to 875; it reads RRGRCGRKNR. Over residues 876-890 the composition is skewed to basic and acidic residues; that stretch reads KTQERFGDKDSKMLV. Tyr901 is subject to Phosphotyrosine. The span at 904-917 shows a compositional bias: basic and acidic residues; sequence CEEKSETSQERFTE. Residues Ser941 and Ser954 each carry the phosphoserine modification. The segment at 983-1083 is disordered; sequence GFSESSEEEE…EEEESELFPR (101 aa). Lys1007 is subject to N6-acetyllysine. Basic residues predominate over residues 1009-1030; the sequence is TLKRKKPILHRRRRVRKRKHHN. Residues 1031-1042 are compositionally biased toward low complexity; the sequence is SSVVTETISETT. Acidic residues-rich tracts occupy residues 1043–1053 and 1065–1079; these read EVLDEPFEDSD and FEME…EESE. Ser1090, Ser1091, and Ser1115 each carry phosphoserine. 5 disordered regions span residues 1096–1174, 1197–1438, 1455–1533, 1546–1568, and 1631–1707; these read RCQS…RKPG, IKPG…GAYQ, HTDE…PSVS, DLGS…STMG, and TCVV…CSMN. Residues 1107–1120 are compositionally biased toward acidic residues; the sequence is EEEEEEEESDDADD. Positions 1136–1147 are enriched in polar residues; the sequence is NSASLEPDTSTP. Basic residues predominate over residues 1148–1174; the sequence is MKKKKGWPKGKSRKPIHWKKRPGRKPG. The segment covering 1204 to 1229 has biased composition (basic and acidic residues); it reads RTQENEEIVEVKEDLLEERKEEMHTE. 2 stretches are compositionally biased toward acidic residues: residues 1230-1241 and 1282-1299; these read PDEEAEEEEDTT and EEPQ…DEVT. A compositionally biased stretch (basic and acidic residues) spans 1317-1334; that stretch reads HLDSLKTKEPEEQPARED. Lys1336 is covalently cross-linked (Glycyl lysine isopeptide (Lys-Gly) (interchain with G-Cter in SUMO2)). 2 stretches are compositionally biased toward basic and acidic residues: residues 1352–1361 and 1393–1414; these read DSRENTKDKD and DSNT…HSEL. The segment covering 1473 to 1490 has biased composition (low complexity); that stretch reads HNSPISSIPSHPSQSVRS. Polar residues-rich tracts occupy residues 1502 to 1523 and 1550 to 1568; these read GYTQ…NMET and IEST…STMG. The tract at residues 1511 to 1636 is interaction with RUNX1-2; that stretch reads GSLSAPSMQN…KSPQTCVVER (126 aa). The segment at 1511-1740 is interaction with PML; sequence GSLSAPSMQN…YERIPGDFGA (230 aa). Pro residues-rich tracts occupy residues 1640-1673 and 1682-1698; these read NQQP…PPQP and QPPP…PQQQ. The required for activation of RUNX1-2 stretch occupies residues 1912 to 1947; that stretch reads SMNMNTLNAMNSYRMTQPMMNSSYHSNPAYMNQTAQ.

This sequence belongs to the MYST (SAS/MOZ) family. Component of the MOZ/MORF complex composed at least of ING5, KAT6A, KAT6B, MEAF6 and one of BRPF1, BRD1/BRPF2 and BRPF3. Interacts with RUNX2. Interacts with RUNX1; phosphorylation of RUNX1 enhances the interaction. Interacts with p53/TP53. Interacts with PML and this interaction positively regulates its acetylation activity towards p53/TP53. In terms of processing, autoacetylated. Autoacetylation at Lys-603 is required for proper function. Phosphorylation at Thr-369 by PKB/AKT1 inhibits its interaction with PML and negatively regulates its acetylation activity towards p53/TP53.

The protein localises to the nucleus. It is found in the nucleolus. The protein resides in the nucleoplasm. Its subcellular location is the PML body. The enzyme catalyses L-lysyl-[protein] + acetyl-CoA = N(6)-acetyl-L-lysyl-[protein] + CoA + H(+). In terms of biological role, histone acetyltransferase that acetylates lysine residues in histone H3 and histone H4 (in vitro). Component of the MOZ/MORF complex which has a histone H3 acetyltransferase activity. May act as a transcriptional coactivator for RUNX1 and RUNX2. Acetylates p53/TP53 at 'Lys-120' and 'Lys-382' and controls its transcriptional activity via association with PML. In Mus musculus (Mouse), this protein is Histone acetyltransferase KAT6A (Kat6a).